The primary structure comprises 122 residues: Small ribosomal subunit protein uS13 (122 aa).

The tract at residues 95–122 is disordered; the sequence is GLPVHGQRTHTNARTRKGPRRGAVGKKK.

It belongs to the universal ribosomal protein uS13 family. In terms of assembly, part of the 30S ribosomal subunit. Forms a loose heterodimer with protein S19. Forms two bridges to the 50S subunit in the 70S ribosome.

Functionally, located at the top of the head of the 30S subunit, it contacts several helices of the 16S rRNA. In the 70S ribosome it contacts the 23S rRNA (bridge B1a) and protein L5 of the 50S subunit (bridge B1b), connecting the 2 subunits; these bridges are implicated in subunit movement. Contacts the tRNAs in the A and P-sites. The polypeptide is Small ribosomal subunit protein uS13 (Nitratidesulfovibrio vulgaris (strain DSM 19637 / Miyazaki F) (Desulfovibrio vulgaris)).